The primary structure comprises 730 residues: ABC transporter G family member 20 (730 aa).

Positions 15–244 (ISLKNVCRGY…YESQTLEEVF (230 aa)) constitute an ABC transporter domain. Residue 47–54 (GASGSGKT) participates in ATP binding. Positions 281–303 (VNNNNNNNNNNNNNNYNNNDDEE) are disordered. Over residues 282-298 (NNNNNNNNNNNNNNYNN) the composition is skewed to low complexity. Residues 489–717 (SFETLAKQQA…FIAVLALNEK (229 aa)) enclose the ABC transmembrane type-2 domain. Helical transmembrane passes span 520 to 540 (FIDFLAPGMVCLISFAHAISI), 572 to 592 (FLGHLPLLLVQITVLLLIAIY), 602 to 622 (IALVFLMTVSLAFVGMSLGLV), 634 to 654 (IQLSLGVYFPTLICSGTLWPL), and 692 to 712 (VWVAFLVVLSWLIFLIFIAVL).

It belongs to the ABC transporter superfamily.

The protein resides in the membrane. This chain is ABC transporter G family member 20 (abcG20), found in Dictyostelium discoideum (Social amoeba).